The following is a 492-amino-acid chain: UTP--glucose-1-phosphate uridylyltransferase (492 aa).

UTP is bound by residues 110 to 113 (LNGG), lysine 124, glutamine 183, and glycine 210. 112 to 113 (GG) provides a ligand contact to substrate. Lysine 124 provides a ligand contact to Mg(2+). Residues histidine 211 and 239–241 (NID) each bind substrate. Aspartate 241 and lysine 379 together coordinate UTP. Aspartate 241 serves as a coordination point for Mg(2+). The active site involves lysine 379. Positions 441 to 492 (VLTVSGNVLFGKNVVLKGTVIILADEKSKICVPDGSVLEDNIIYGNLPIIDH) are oligomerization.

The protein belongs to the UDPGP type 1 family. As to quaternary structure, homooctamer.

The enzyme catalyses alpha-D-glucose 1-phosphate + UTP + H(+) = UDP-alpha-D-glucose + diphosphate. Functionally, plays a central role as a glucosyl donor in cellular metabolic pathways. This is UTP--glucose-1-phosphate uridylyltransferase (UGP1) from Encephalitozoon cuniculi (strain GB-M1) (Microsporidian parasite).